The primary structure comprises 243 residues: Probable flavin-dependent thymidylate synthase (243 aa).

Residues 21 to 239 (FEVDDFEESK…PNTYQDIPDV (219 aa)) enclose the ThyX domain. FAD-binding positions include Ser80 and 103 to 105 (RHR). Residues 100-103 (ELER), 113-115 (SQR), and Arg178 contribute to the dUMP site. A ThyX motif motif is present at residues 103-113 (RHRHLSFSVVS). 194–196 (NHR) is an FAD binding site. Arg205 is a dUMP binding site. Arg205 functions as the Involved in ionization of N3 of dUMP, leading to its activation in the catalytic mechanism.

It belongs to the thymidylate synthase ThyX family. In terms of assembly, homotetramer. FAD is required as a cofactor.

It catalyses the reaction dUMP + (6R)-5,10-methylene-5,6,7,8-tetrahydrofolate + NADPH + H(+) = dTMP + (6S)-5,6,7,8-tetrahydrofolate + NADP(+). It participates in pyrimidine metabolism; dTTP biosynthesis. Its function is as follows. Catalyzes the reductive methylation of 2'-deoxyuridine-5'-monophosphate (dUMP) to 2'-deoxythymidine-5'-monophosphate (dTMP) while utilizing 5,10-methylenetetrahydrofolate (mTHF) as the methyl donor, and NADPH and FADH(2) as the reductant. This is Probable flavin-dependent thymidylate synthase (48) from Mycobacterium phage L5 (Mycobacteriophage L5).